The primary structure comprises 373 residues: sn-glycerol-3-phosphate import ATP-binding protein UgpC 2 (373 aa).

The 231-residue stretch at 4–234 (IDIRQVRKSY…PASTFVASFI (231 aa)) folds into the ABC transporter domain. 36–43 (GPSGCGKS) is a binding site for ATP.

The protein belongs to the ABC transporter superfamily. sn-glycerol-3-phosphate importer (TC 3.A.1.1.3) family. In terms of assembly, the complex is composed of two ATP-binding proteins (UgpC), two transmembrane proteins (UgpA and UgpE) and a solute-binding protein (UgpB).

The protein localises to the cell inner membrane. It carries out the reaction sn-glycerol 3-phosphate(out) + ATP + H2O = sn-glycerol 3-phosphate(in) + ADP + phosphate + H(+). Functionally, part of the ABC transporter complex UgpBAEC involved in sn-glycerol-3-phosphate (G3P) import. Responsible for energy coupling to the transport system. In Agrobacterium fabrum (strain C58 / ATCC 33970) (Agrobacterium tumefaciens (strain C58)), this protein is sn-glycerol-3-phosphate import ATP-binding protein UgpC 2.